The chain runs to 241 residues: 3-deoxy-D-manno-octulosonic acid kinase (241 aa).

Residue D171 is part of the active site.

It belongs to the protein kinase superfamily. KdkA/RfaP family.

It localises to the cell inner membrane. It catalyses the reaction an alpha-Kdo-(2-&gt;6)-lipid IVA + ATP = a 4-O-phospho-alpha-Kdo-(2-&gt;6)-lipid IVA + ADP + H(+). It participates in bacterial outer membrane biogenesis; LPS core biosynthesis. Catalyzes the ATP-dependent phosphorylation of the 3-deoxy-D-manno-octulosonic acid (Kdo) residue in Kdo-lipid IV(A) at the 4-OH position. The protein is 3-deoxy-D-manno-octulosonic acid kinase of Haemophilus influenzae (strain PittEE).